A 586-amino-acid polypeptide reads, in one-letter code: Maltogenic alpha-amylase (586 aa).

Ca(2+)-binding residues include asparagine 147, asparagine 152, aspartate 153, glycine 172, and aspartate 174. Substrate contacts are provided by histidine 247 and arginine 326. Residue aspartate 328 is the Nucleophile of the active site. Glutamate 357 (proton donor) is an active-site residue. Substrate-binding positions include 423 to 424 (HD), aspartate 468, and arginine 472.

Belongs to the glycosyl hydrolase 13 family. The cofactor is Ca(2+).

The enzyme catalyses hydrolysis of (1-&gt;4)-alpha-D-glucosidic linkages in polysaccharides so as to remove successive alpha-maltose residues from the non-reducing ends of the chains.. Functionally, converts starch into maltose. The protein is Maltogenic alpha-amylase of Bacillus acidopullulyticus.